The sequence spans 542 residues: Chaperonin GroEL 3 (542 aa).

ATP contacts are provided by residues 30-33 (TLGP), Lys51, 87-91 (DGTTT), Gly415, and Asp496.

Belongs to the chaperonin (HSP60) family. As to quaternary structure, forms a cylinder of 14 subunits composed of two heptameric rings stacked back-to-back. Interacts with the co-chaperonin GroES.

It is found in the cytoplasm. The catalysed reaction is ATP + H2O + a folded polypeptide = ADP + phosphate + an unfolded polypeptide.. Its function is as follows. Together with its co-chaperonin GroES, plays an essential role in assisting protein folding. The GroEL-GroES system forms a nano-cage that allows encapsulation of the non-native substrate proteins and provides a physical environment optimized to promote and accelerate protein folding. The polypeptide is Chaperonin GroEL 3 (Rhizobium johnstonii (strain DSM 114642 / LMG 32736 / 3841) (Rhizobium leguminosarum bv. viciae)).